Here is a 243-residue protein sequence, read N- to C-terminus: 1-(5-phosphoribosyl)-5-[(5-phosphoribosylamino)methylideneamino] imidazole-4-carboxamide isomerase (243 aa).

The active-site Proton acceptor is the D8. The active-site Proton donor is D129.

This sequence belongs to the HisA/HisF family.

The protein resides in the cytoplasm. The enzyme catalyses 1-(5-phospho-beta-D-ribosyl)-5-[(5-phospho-beta-D-ribosylamino)methylideneamino]imidazole-4-carboxamide = 5-[(5-phospho-1-deoxy-D-ribulos-1-ylimino)methylamino]-1-(5-phospho-beta-D-ribosyl)imidazole-4-carboxamide. Its pathway is amino-acid biosynthesis; L-histidine biosynthesis; L-histidine from 5-phospho-alpha-D-ribose 1-diphosphate: step 4/9. The protein is 1-(5-phosphoribosyl)-5-[(5-phosphoribosylamino)methylideneamino] imidazole-4-carboxamide isomerase of Parvibaculum lavamentivorans (strain DS-1 / DSM 13023 / NCIMB 13966).